A 579-amino-acid chain; its full sequence is Arginine--tRNA ligase (579 aa).

The 'HIGH' region motif lies at 128–138; sequence PNLAKEMHVGH.

Belongs to the class-I aminoacyl-tRNA synthetase family. As to quaternary structure, monomer.

The protein localises to the cytoplasm. The enzyme catalyses tRNA(Arg) + L-arginine + ATP = L-arginyl-tRNA(Arg) + AMP + diphosphate. The chain is Arginine--tRNA ligase from Pseudomonas syringae pv. syringae (strain B728a).